A 416-amino-acid polypeptide reads, in one-letter code: Serine hydroxymethyltransferase (416 aa).

(6S)-5,6,7,8-tetrahydrofolate-binding positions include Leu-119 and 123 to 125; that span reads GHL. Lys-228 is subject to N6-(pyridoxal phosphate)lysine.

Belongs to the SHMT family. As to quaternary structure, homodimer. Pyridoxal 5'-phosphate serves as cofactor.

The protein resides in the cytoplasm. It carries out the reaction (6R)-5,10-methylene-5,6,7,8-tetrahydrofolate + glycine + H2O = (6S)-5,6,7,8-tetrahydrofolate + L-serine. The protein operates within one-carbon metabolism; tetrahydrofolate interconversion. It participates in amino-acid biosynthesis; glycine biosynthesis; glycine from L-serine: step 1/1. In terms of biological role, catalyzes the reversible interconversion of serine and glycine with tetrahydrofolate (THF) serving as the one-carbon carrier. This reaction serves as the major source of one-carbon groups required for the biosynthesis of purines, thymidylate, methionine, and other important biomolecules. Also exhibits THF-independent aldolase activity toward beta-hydroxyamino acids, producing glycine and aldehydes, via a retro-aldol mechanism. This chain is Serine hydroxymethyltransferase, found in Moorella thermoacetica (strain ATCC 39073 / JCM 9320).